Consider the following 102-residue polypeptide: Small ribosomal subunit protein uS10 (102 aa).

It belongs to the universal ribosomal protein uS10 family. In terms of assembly, part of the 30S ribosomal subunit.

Functionally, involved in the binding of tRNA to the ribosomes. The polypeptide is Small ribosomal subunit protein uS10 (Streptococcus suis (strain 98HAH33)).